Consider the following 967-residue polypeptide: Sulfite dehydrogenase subunit A (967 aa).

One can recognise a 4Fe-4S Mo/W bis-MGD-type domain in the interval 15–71; the sequence is VEVKETTCYMCACRCGIRVHLRDGEVRYIDGNPNHPLNKGVICAKGSSGIMKQYSPG. Residues cysteine 22, cysteine 25, cysteine 29, and cysteine 57 each coordinate [4Fe-4S] cluster.

It belongs to the prokaryotic molybdopterin-containing oxidoreductase family. Forms a heterotrimeric membrane-bound complex composed of a catalytic heterodimer (SoeAB) and a membrane anchor protein (SoeC). Requires [4Fe-4S] cluster as cofactor. Mo-bis(molybdopterin guanine dinucleotide) is required as a cofactor.

It is found in the cell inner membrane. It catalyses the reaction a quinone + sulfite + H2O = a quinol + sulfate. The catalysed reaction is a menaquinone + sulfite + H2O = a menaquinol + sulfate. Its function is as follows. Part of the SoeABC complex that catalyzes the oxidation of sulfite to sulfate. The chain is Sulfite dehydrogenase subunit A from Allochromatium vinosum (strain ATCC 17899 / DSM 180 / NBRC 103801 / NCIMB 10441 / D) (Chromatium vinosum).